We begin with the raw amino-acid sequence, 364 residues long: Aminomethyltransferase (364 aa).

The protein belongs to the GcvT family. In terms of assembly, the glycine cleavage system is composed of four proteins: P, T, L and H.

It carries out the reaction N(6)-[(R)-S(8)-aminomethyldihydrolipoyl]-L-lysyl-[protein] + (6S)-5,6,7,8-tetrahydrofolate = N(6)-[(R)-dihydrolipoyl]-L-lysyl-[protein] + (6R)-5,10-methylene-5,6,7,8-tetrahydrofolate + NH4(+). Functionally, the glycine cleavage system catalyzes the degradation of glycine. The polypeptide is Aminomethyltransferase (Escherichia coli O127:H6 (strain E2348/69 / EPEC)).